Reading from the N-terminus, the 121-residue chain is Large ribosomal subunit protein bL12 (121 aa).

The protein belongs to the bacterial ribosomal protein bL12 family. In terms of assembly, homodimer. Part of the ribosomal stalk of the 50S ribosomal subunit. Forms a multimeric L10(L12)X complex, where L10 forms an elongated spine to which 2 to 4 L12 dimers bind in a sequential fashion. Binds GTP-bound translation factors.

Forms part of the ribosomal stalk which helps the ribosome interact with GTP-bound translation factors. Is thus essential for accurate translation. This chain is Large ribosomal subunit protein bL12, found in Clostridium perfringens (strain ATCC 13124 / DSM 756 / JCM 1290 / NCIMB 6125 / NCTC 8237 / Type A).